Here is a 262-residue protein sequence, read N- to C-terminus: Polyamine aminopropyltransferase (262 aa).

The PABS domain occupies Met-1–Pro-249. Asn-29 contributes to the S-methyl-5'-thioadenosine binding site. Asp-83 is a spermidine binding site. Catalysis depends on Asp-155, which acts as the Proton acceptor.

Belongs to the spermidine/spermine synthase family. Homodimer or homotetramer.

The protein resides in the cytoplasm. The catalysed reaction is S-adenosyl 3-(methylsulfanyl)propylamine + putrescine = S-methyl-5'-thioadenosine + spermidine + H(+). It functions in the pathway amine and polyamine biosynthesis; spermidine biosynthesis; spermidine from putrescine: step 1/1. Catalyzes the irreversible transfer of a propylamine group from the amino donor S-adenosylmethioninamine (decarboxy-AdoMet) to putrescine (1,4-diaminobutane) to yield spermidine. This is Polyamine aminopropyltransferase from Helicobacter acinonychis (strain Sheeba).